Reading from the N-terminus, the 98-residue chain is NADH-ubiquinone oxidoreductase chain 4L (98 aa).

3 helical membrane passes run 1–21 (MPSI…GTLI), 26–46 (LMSS…LTSL), and 61–81 (IILL…LVMV).

This sequence belongs to the complex I subunit 4L family. In terms of assembly, core subunit of respiratory chain NADH dehydrogenase (Complex I) which is composed of 45 different subunits.

It is found in the mitochondrion inner membrane. It catalyses the reaction a ubiquinone + NADH + 5 H(+)(in) = a ubiquinol + NAD(+) + 4 H(+)(out). Functionally, core subunit of the mitochondrial membrane respiratory chain NADH dehydrogenase (Complex I) which catalyzes electron transfer from NADH through the respiratory chain, using ubiquinone as an electron acceptor. Part of the enzyme membrane arm which is embedded in the lipid bilayer and involved in proton translocation. This is NADH-ubiquinone oxidoreductase chain 4L (MT-ND4L) from Otolemur crassicaudatus (Brown greater galago).